Reading from the N-terminus, the 307-residue chain is Bidirectional sugar transporter SWEET11 (307 aa).

Residues Met1 to Thr14 lie on the Extracellular side of the membrane. Residues Leu15–Phe35 form a helical membrane-spanning segment. Residues Gly17–Arg100 enclose the MtN3/slv 1 domain. Residues Leu36 to Tyr47 are Cytoplasmic-facing. Residues Ser48 to Val68 traverse the membrane as a helical segment. The Extracellular portion of the chain corresponds to Lys69–Pro74. The helical transmembrane segment at Leu75–Val95 threads the bilayer. Over Tyr96–Ala107 the chain is Cytoplasmic. Residues Phe108 to Val128 traverse the membrane as a helical segment. The Extracellular segment spans residues Pro129–Lys135. The helical transmembrane segment at Phe136–Ile156 threads the bilayer. In terms of domain architecture, MtN3/slv 2 spans Phe136–Pro219. At Phe157–Met168 the chain is on the cytoplasmic side. A helical transmembrane segment spans residues Pro169 to Phe189. At Thr190–Tyr194 the chain is on the extracellular side. A helical transmembrane segment spans residues Val195–Trp215. Residues Tyr216–Val307 are Cytoplasmic-facing.

This sequence belongs to the SWEET sugar transporter family. In terms of assembly, interacts with COPT1 and COPT2. Interacts with APX8. In terms of tissue distribution, mostly expressed in panicles and anthers. Also detected in leaves (leaf collar, leaf auricle, leaf ligule), roots, sheaths, culms and culm nodes.

It localises to the cell membrane. Functionally, mediates both low-affinity uptake and efflux of sugar across the plasma membrane. Required for pollen viability. Involved in the transport of copper, in cooperation with COPT1 and COPT2. Its function is as follows. Confers sensitivity to bacterial blight mediated by X.oryzae pv. oryzae (Xoo) in its Xa13 allelic form (e.g. cv. IR24), probably by providing the sugar required for the pathogen growth, or by reducing copper contents in xylem. However, a recessive resistance can be associated with the xa13 allele (in which the promoter is mutated leading to reduced induction upon pathogen infection, e.g. cv. IRBB13), specifically toward Xoo Philippine race 6 and Indian race PXO8. The sequence is that of Bidirectional sugar transporter SWEET11 (SWEET11) from Oryza sativa subsp. japonica (Rice).